We begin with the raw amino-acid sequence, 156 residues long: FAD synthase (156 aa).

ATP is bound by residues T16–F17, H21–H24, D101, and Y129.

The protein belongs to the archaeal FAD synthase family. In terms of assembly, homodimer. A divalent metal cation serves as cofactor.

The catalysed reaction is FMN + ATP + H(+) = FAD + diphosphate. It functions in the pathway cofactor biosynthesis; FAD biosynthesis; FAD from FMN: step 1/1. Functionally, catalyzes the transfer of the AMP portion of ATP to flavin mononucleotide (FMN) to produce flavin adenine dinucleotide (FAD) coenzyme. This Methanococcus aeolicus (strain ATCC BAA-1280 / DSM 17508 / OCM 812 / Nankai-3) protein is FAD synthase.